A 332-amino-acid polypeptide reads, in one-letter code: Glycerol-3-phosphate dehydrogenase [NAD(P)+] (332 aa).

Positions 15, 16, and 110 each coordinate NADPH. Residues Lys110, Gly137, and Ser139 each contribute to the sn-glycerol 3-phosphate site. Ala141 provides a ligand contact to NADPH. Positions 192, 245, 255, 256, and 257 each coordinate sn-glycerol 3-phosphate. The active-site Proton acceptor is Lys192. Arg256 is an NADPH binding site. Glu282 contributes to the NADPH binding site.

This sequence belongs to the NAD-dependent glycerol-3-phosphate dehydrogenase family.

It is found in the cytoplasm. The enzyme catalyses sn-glycerol 3-phosphate + NAD(+) = dihydroxyacetone phosphate + NADH + H(+). The catalysed reaction is sn-glycerol 3-phosphate + NADP(+) = dihydroxyacetone phosphate + NADPH + H(+). It functions in the pathway membrane lipid metabolism; glycerophospholipid metabolism. Functionally, catalyzes the reduction of the glycolytic intermediate dihydroxyacetone phosphate (DHAP) to sn-glycerol 3-phosphate (G3P), the key precursor for phospholipid synthesis. This Coxiella burnetii (strain CbuG_Q212) (Coxiella burnetii (strain Q212)) protein is Glycerol-3-phosphate dehydrogenase [NAD(P)+].